A 180-amino-acid polypeptide reads, in one-letter code: Crossover junction endodeoxyribonuclease RuvC (180 aa).

Active-site residues include aspartate 7, glutamate 66, and aspartate 138. Mg(2+) contacts are provided by aspartate 7, glutamate 66, and aspartate 138.

Belongs to the RuvC family. In terms of assembly, homodimer which binds Holliday junction (HJ) DNA. The HJ becomes 2-fold symmetrical on binding to RuvC with unstacked arms; it has a different conformation from HJ DNA in complex with RuvA. In the full resolvosome a probable DNA-RuvA(4)-RuvB(12)-RuvC(2) complex forms which resolves the HJ. Requires Mg(2+) as cofactor.

Its subcellular location is the cytoplasm. The catalysed reaction is Endonucleolytic cleavage at a junction such as a reciprocal single-stranded crossover between two homologous DNA duplexes (Holliday junction).. In terms of biological role, the RuvA-RuvB-RuvC complex processes Holliday junction (HJ) DNA during genetic recombination and DNA repair. Endonuclease that resolves HJ intermediates. Cleaves cruciform DNA by making single-stranded nicks across the HJ at symmetrical positions within the homologous arms, yielding a 5'-phosphate and a 3'-hydroxyl group; requires a central core of homology in the junction. The consensus cleavage sequence is 5'-(A/T)TT(C/G)-3'. Cleavage occurs on the 3'-side of the TT dinucleotide at the point of strand exchange. HJ branch migration catalyzed by RuvA-RuvB allows RuvC to scan DNA until it finds its consensus sequence, where it cleaves and resolves the cruciform DNA. The sequence is that of Crossover junction endodeoxyribonuclease RuvC from Burkholderia orbicola (strain AU 1054).